Consider the following 146-residue polypeptide: Leptin (146 aa).

Residues Cys-96 and Cys-146 are joined by a disulfide bond.

Belongs to the leptin family.

It localises to the secreted. Its function is as follows. Key player in the regulation of energy balance and body weight control. Once released into the circulation, has central and peripheral effects by binding LEPR, found in many tissues, which results in the activation of several major signaling pathways. In the hypothalamus, acts as an appetite-regulating factor that induces a decrease in food intake and an increase in energy consumption by inducing anorexinogenic factors and suppressing orexigenic neuropeptides, also regulates bone mass and secretion of hypothalamo-pituitary-adrenal hormones. In the periphery, increases basal metabolism, influences reproductive function, regulates pancreatic beta-cell function and insulin secretion, is pro-angiogenic for endothelial cell and affects innate and adaptive immunity. In the arcuate nucleus of the hypothalamus, activates by depolarization POMC neurons inducing FOS and SOCS3 expression to release anorexigenic peptides and inhibits by hyperpolarization NPY neurons inducing SOCS3 with a consequent reduction on release of orexigenic peptides. In addition to its known satiety inducing effect, has a modulatory role in nutrient absorption. In the intestine, reduces glucose absorption by enterocytes by activating PKC and leading to a sequential activation of p38, PI3K and ERK signaling pathways which exerts an inhibitory effect on glucose absorption. Acts as a growth factor on certain tissues, through the activation of different signaling pathways increases expression of genes involved in cell cycle regulation such as CCND1, via JAK2-STAT3 pathway, or VEGFA, via MAPK1/3 and PI3K-AKT1 pathways. May also play an apoptotic role via JAK2-STAT3 pathway and up-regulation of BIRC5 expression. Pro-angiogenic, has mitogenic activity on vascular endothelial cells and plays a role in matrix remodeling by regulating the expression of matrix metalloproteinases (MMPs) and tissue inhibitors of metalloproteinases (TIMPs). In innate immunity, modulates the activity and function of neutrophils by increasing chemotaxis and the secretion of oxygen radicals. Increases phagocytosis by macrophages and enhances secretion of pro-inflammatory mediators. Increases cytotoxic ability of NK cells. Plays a pro-inflammatory role, in synergy with IL1B, by inducing NOS2 which promotes the production of IL6, IL8 and Prostaglandin E2, through a signaling pathway that involves JAK2, PI3K, MAP2K1/MEK1 and MAPK14/p38. In adaptive immunity, promotes the switch of memory T-cells towards T helper-1 cell immune responses. Increases CD4(+)CD25(-) T-cell proliferation and reduces autophagy during TCR (T-cell receptor) stimulation, through MTOR signaling pathway activation and BCL2 up-regulation. This Ovis aries (Sheep) protein is Leptin (LEP).